The primary structure comprises 396 residues: 1-deoxy-D-xylulose 5-phosphate reductoisomerase (396 aa).

5 residues coordinate NADPH: Thr-10, Gly-11, Ser-12, Ile-13, and Asn-123. Lys-124 contacts 1-deoxy-D-xylulose 5-phosphate. Glu-125 lines the NADPH pocket. Asp-149 is a binding site for Mn(2+). Residues Ser-150, Glu-151, Ser-185, and His-208 each contribute to the 1-deoxy-D-xylulose 5-phosphate site. Glu-151 is a Mn(2+) binding site. An NADPH-binding site is contributed by Gly-214. Ser-221, Asn-226, Lys-227, and Glu-230 together coordinate 1-deoxy-D-xylulose 5-phosphate. Glu-230 serves as a coordination point for Mn(2+).

This sequence belongs to the DXR family. Mg(2+) serves as cofactor. It depends on Mn(2+) as a cofactor.

It catalyses the reaction 2-C-methyl-D-erythritol 4-phosphate + NADP(+) = 1-deoxy-D-xylulose 5-phosphate + NADPH + H(+). It participates in isoprenoid biosynthesis; isopentenyl diphosphate biosynthesis via DXP pathway; isopentenyl diphosphate from 1-deoxy-D-xylulose 5-phosphate: step 1/6. Functionally, catalyzes the NADPH-dependent rearrangement and reduction of 1-deoxy-D-xylulose-5-phosphate (DXP) to 2-C-methyl-D-erythritol 4-phosphate (MEP). This Shewanella baltica (strain OS223) protein is 1-deoxy-D-xylulose 5-phosphate reductoisomerase.